Consider the following 286-residue polypeptide: Foldase protein PrsA 1 (286 aa).

An N-terminal signal peptide occupies residues 1–18 (MKKAMLALAATSVIALSA). Cysteine 19 carries the N-palmitoyl cysteine lipid modification. A lipid anchor (S-diacylglycerol cysteine) is attached at cysteine 19. Residues 130–220 (KPEIKASHIL…FGYHIIKVTD (91 aa)) form the PpiC domain.

The protein belongs to the PrsA family.

The protein localises to the cell membrane. It catalyses the reaction [protein]-peptidylproline (omega=180) = [protein]-peptidylproline (omega=0). Plays a major role in protein secretion by helping the post-translocational extracellular folding of several secreted proteins. In Bacillus cereus (strain ATCC 14579 / DSM 31 / CCUG 7414 / JCM 2152 / NBRC 15305 / NCIMB 9373 / NCTC 2599 / NRRL B-3711), this protein is Foldase protein PrsA 1 (prsA1).